Here is a 328-residue protein sequence, read N- to C-terminus: 3-dehydroquinate synthase (328 aa).

It belongs to the archaeal-type DHQ synthase family.

The enzyme catalyses 2-amino-2,3,7-trideoxy-D-lyxo-hept-6-ulosonate + NAD(+) + H2O = 3-dehydroquinate + NH4(+) + NADH + H(+). Catalyzes the oxidative deamination and cyclization of 2-amino-3,7-dideoxy-D-threo-hept-6-ulosonic acid (ADH) to yield 3-dehydroquinate (DHQ), which is fed into the canonical shikimic pathway of aromatic amino acid biosynthesis. The sequence is that of 3-dehydroquinate synthase from Methanospirillum hungatei JF-1 (strain ATCC 27890 / DSM 864 / NBRC 100397 / JF-1).